The sequence spans 121 residues: Protein CHLORORESPIRATORY REDUCTION 42, chloroplastic (121 aa).

In terms of assembly, biogenesis factor component of the plastidial NDH subcomplex A.

It is found in the plastid. The protein resides in the chloroplast. The protein localises to the chloroplast stroma. Required for both formation and activity of the chloroplast NAD(P)H dehydrogenase (NDH) complex of the photosynthetic electron transport chain. Functions in assembly or stabilization of the NDH complex; probably involved, together with CRR1 and CRR6, in the incorporation of NdhJ, NdhM, NdhK and NdhI into the NDH subcomplex A assembly intermediate (NAI500) to produce the complex NAI400. The chain is Protein CHLORORESPIRATORY REDUCTION 42, chloroplastic from Arabidopsis thaliana (Mouse-ear cress).